We begin with the raw amino-acid sequence, 591 residues long: Dolichyl-phosphooligosaccharide-protein glycotransferase 1 (591 aa).

The Cytoplasmic segment spans residues 1-5 (MDRKV). Residues 6–26 (LMLAVILFALAVRFQNFGEIF) form a helical membrane-spanning segment. Residues 27–67 (DSGIYYTGYDSYYHMRLVEVMVKESFRPDYDYYINYPFGLK) are Extracellular-facing. The DXD motif 1 motif lies at 34 to 36 (GYD). Residue Asp36 participates in Mn(2+) binding. A helical membrane pass occupies residues 68-88 (ITWPPLFDYILAFPGMLFGFH). At 89-91 (SSE) the chain is on the cytoplasmic side. Residues 92–112 (IFAVFLPVILGVLSVVLICLT) form a helical membrane-spanning segment. Residues 113 to 121 (ALQIVNNQT) lie on the Extracellular side of the membrane. A helical transmembrane segment spans residues 122 to 142 (FALISAFIYAAAPVAVWKTVL). Over 143–147 (GQADH) the chain is Cytoplasmic. Position 146 (Asp146) interacts with Mn(2+). Residues 146–148 (DHH) carry the DXD motif 2 motif. His147 contributes to the a glycophospholipid binding site. A Mn(2+)-binding site is contributed by His148. The helical transmembrane segment at 148-168 (HALVIFLFLLSAYLLLKDGVW) threads the bilayer. Residue Lys169 is a topological domain, extracellular. Residues 170–190 (ILAGLPMLFMALAWLGSPIYG) traverse the membrane as a helical segment. Residues 191–219 (ALLAFSALVHFDRKALRLVAASYLIPAIS) lie on the Cytoplasmic side of the membrane. Residues 220-240 (FVLYPPVGISFFGLAAFLFVG) form a helical membrane-spanning segment. The Extracellular portion of the chain corresponds to 241-252 (SVVKGYEDRFRN). The chain crosses the membrane as a helical span at residues 253 to 273 (ATIYYIALSLATVLIIYFIPL). Residues 274 to 275 (PH) lie on the Cytoplasmic side of the membrane. Residues 276-296 (FEFVKGGINYIFGANIYLPTI) form a helical membrane-spanning segment. The TIXE motif motif lies at 295 to 298 (TISE). Residues 297–303 (SEARSLQ) are Extracellular-facing. Residues 304–324 (IFEIISASGYIYFIFALISVL) traverse the membrane as a helical segment. The Cytoplasmic segment spans residues 325-327 (FFR). Residues 328–344 (NRFVLSMFFLSFILALM) traverse the membrane as a helical segment. Residues 345–347 (QLR) are Extracellular-facing. Residue Arg347 coordinates a glycophospholipid. A helical membrane pass occupies residues 348–368 (FTEVLVVPSALLSAYLVSLVL). Over 369 to 408 (ERLEYPVFEKADEEEKSRRRKRKDRKVKQKNAEVEWKDHA) the chain is Cytoplasmic. A helical transmembrane segment spans residues 409–429 (VVAAFLVILAIPCIVVAVVPF). Over 430 to 591 (DLTEDWKEAL…DVKIFEVVGS (162 aa)) the chain is Extracellular. Positions 465-467 (WWD) are interacts with target acceptor peptide in protein substrate. Residues 465–469 (WWDYG) carry the WWDYG motif motif. The short motif at 521–535 (EITMKDANNTKFPAI) is the DKi motif element.

The protein belongs to the STT3 family. It depends on Mn(2+) as a cofactor. Mg(2+) is required as a cofactor. Requires Zn(2+) as cofactor.

It is found in the cell membrane. It catalyses the reaction an archaeal dolichyl phosphooligosaccharide + [protein]-L-asparagine = an archaeal dolichyl phosphate + a glycoprotein with the oligosaccharide chain attached by N-beta-D-glycosyl linkage to a protein L-asparagine.. The protein operates within protein modification; protein glycosylation. Oligosaccharyl transferase (OST) that catalyzes the initial transfer of a defined glycan (a GalNAc-linked heptasaccharide composed of 4 Hex, 3 dHex and a sulfate for A.fulgidus AglB-S) from the lipid carrier dolichol-monophosphate to an asparagine residue within an Asn-X-Ser/Thr consensus motif in nascent polypeptide chains, the first step in protein N-glycosylation. The sequence is that of Dolichyl-phosphooligosaccharide-protein glycotransferase 1 (aglB1) from Archaeoglobus fulgidus (strain ATCC 49558 / DSM 4304 / JCM 9628 / NBRC 100126 / VC-16).